The chain runs to 366 residues: Aminomethyltransferase (366 aa).

Belongs to the GcvT family. The glycine cleavage system is composed of four proteins: P, T, L and H.

The enzyme catalyses N(6)-[(R)-S(8)-aminomethyldihydrolipoyl]-L-lysyl-[protein] + (6S)-5,6,7,8-tetrahydrofolate = N(6)-[(R)-dihydrolipoyl]-L-lysyl-[protein] + (6R)-5,10-methylene-5,6,7,8-tetrahydrofolate + NH4(+). Its function is as follows. The glycine cleavage system catalyzes the degradation of glycine. The protein is Aminomethyltransferase of Bordetella avium (strain 197N).